A 149-amino-acid polypeptide reads, in one-letter code: UPF0336 protein CMM_2793 (149 aa).

The MaoC-like domain occupies 16-117 (APYLVGREKV…TVTKVATLGG (102 aa)).

It belongs to the UPF0336 family.

The protein is UPF0336 protein CMM_2793 of Clavibacter michiganensis subsp. michiganensis (strain NCPPB 382).